The primary structure comprises 217 residues: 3,4-dihydroxy-2-butanone 4-phosphate synthase (217 aa).

D-ribulose 5-phosphate contacts are provided by residues 37–38, aspartate 42, 150–154, and glutamate 174; these read RE and RGGHT. Glutamate 38 is a Mg(2+) binding site. Histidine 153 provides a ligand contact to Mg(2+).

It belongs to the DHBP synthase family. As to quaternary structure, homodimer. It depends on Mg(2+) as a cofactor. Mn(2+) serves as cofactor.

The enzyme catalyses D-ribulose 5-phosphate = (2S)-2-hydroxy-3-oxobutyl phosphate + formate + H(+). The protein operates within cofactor biosynthesis; riboflavin biosynthesis; 2-hydroxy-3-oxobutyl phosphate from D-ribulose 5-phosphate: step 1/1. In terms of biological role, catalyzes the conversion of D-ribulose 5-phosphate to formate and 3,4-dihydroxy-2-butanone 4-phosphate. The polypeptide is 3,4-dihydroxy-2-butanone 4-phosphate synthase (Salmonella arizonae (strain ATCC BAA-731 / CDC346-86 / RSK2980)).